A 314-amino-acid polypeptide reads, in one-letter code: Bifunctional riboflavin kinase/FMN adenylyltransferase (314 aa).

The protein belongs to the RibF family.

It carries out the reaction riboflavin + ATP = FMN + ADP + H(+). The enzyme catalyses FMN + ATP + H(+) = FAD + diphosphate. The protein operates within cofactor biosynthesis; FAD biosynthesis; FAD from FMN: step 1/1. Its pathway is cofactor biosynthesis; FMN biosynthesis; FMN from riboflavin (ATP route): step 1/1. In terms of biological role, catalyzes the phosphorylation of riboflavin to FMN followed by the adenylation of FMN to FAD. Can also catalyze the phosphorylation of the toxic riboflavin analogs 8-demethyl-8-aminoriboflavin (AF) to 8-demethyl-8-aminoriboflavin mononucleotide (AFMN) and roseoflavin (RoF) to roseoflavin mononucleotide (RoFMN), and the adenylation of AFMN to 8-demethyl-8-aminoriboflavin adenine dinucleotide (AFAD). This Listeria monocytogenes serovar 1/2a (strain ATCC BAA-679 / EGD-e) protein is Bifunctional riboflavin kinase/FMN adenylyltransferase.